Here is a 414-residue protein sequence, read N- to C-terminus: Enolase (414 aa).

Glutamine 162 serves as a coordination point for (2R)-2-phosphoglycerate. Glutamate 204 serves as the catalytic Proton donor. Residues aspartate 239, glutamate 280, and aspartate 307 each contribute to the Mg(2+) site. (2R)-2-phosphoglycerate-binding residues include lysine 332, arginine 361, serine 362, and lysine 383. The Proton acceptor role is filled by lysine 332.

The protein belongs to the enolase family. It depends on Mg(2+) as a cofactor.

The protein resides in the cytoplasm. It localises to the secreted. Its subcellular location is the cell surface. The catalysed reaction is (2R)-2-phosphoglycerate = phosphoenolpyruvate + H2O. It functions in the pathway carbohydrate degradation; glycolysis; pyruvate from D-glyceraldehyde 3-phosphate: step 4/5. Its function is as follows. Catalyzes the reversible conversion of 2-phosphoglycerate (2-PG) into phosphoenolpyruvate (PEP). It is essential for the degradation of carbohydrates via glycolysis. This Campylobacter jejuni subsp. jejuni serotype O:6 (strain 81116 / NCTC 11828) protein is Enolase.